We begin with the raw amino-acid sequence, 670 residues long: DNA ligase (670 aa).

NAD(+) is bound by residues Asp36–Asp40, Ser84–Leu85, and Glu116. Catalysis depends on Lys118, which acts as the N6-AMP-lysine intermediate. Positions 139, 177, 293, and 317 each coordinate NAD(+). 4 residues coordinate Zn(2+): Cys411, Cys414, Cys429, and Cys434. Positions Lys594–Glu670 constitute a BRCT domain.

Belongs to the NAD-dependent DNA ligase family. LigA subfamily. It depends on Mg(2+) as a cofactor. Mn(2+) is required as a cofactor.

The catalysed reaction is NAD(+) + (deoxyribonucleotide)n-3'-hydroxyl + 5'-phospho-(deoxyribonucleotide)m = (deoxyribonucleotide)n+m + AMP + beta-nicotinamide D-nucleotide.. Functionally, DNA ligase that catalyzes the formation of phosphodiester linkages between 5'-phosphoryl and 3'-hydroxyl groups in double-stranded DNA using NAD as a coenzyme and as the energy source for the reaction. It is essential for DNA replication and repair of damaged DNA. The sequence is that of DNA ligase from Thermodesulfovibrio yellowstonii (strain ATCC 51303 / DSM 11347 / YP87).